Consider the following 141-residue polypeptide: Large ribosomal subunit protein uL11c (141 aa).

Belongs to the universal ribosomal protein uL11 family. In terms of assembly, part of the ribosomal stalk of the 50S ribosomal subunit. Interacts with L10 and the large rRNA to form the base of the stalk. L10 forms an elongated spine to which L12 dimers bind in a sequential fashion forming a multimeric L10(L12)X complex.

It localises to the plastid. It is found in the cyanelle. Functionally, forms part of the ribosomal stalk which helps the ribosome interact with GTP-bound translation factors. This is Large ribosomal subunit protein uL11c from Cyanophora paradoxa.